The chain runs to 214 residues: Phosphatidylserine decarboxylase proenzyme (214 aa).

The Schiff-base intermediate with substrate; via pyruvic acid role is filled by Ser-182. Residue Ser-182 is modified to Pyruvic acid (Ser); by autocatalysis.

The protein belongs to the phosphatidylserine decarboxylase family. PSD-A subfamily. Heterodimer of a large membrane-associated beta subunit and a small pyruvoyl-containing alpha subunit. The cofactor is pyruvate. In terms of processing, is synthesized initially as an inactive proenzyme. Formation of the active enzyme involves a self-maturation process in which the active site pyruvoyl group is generated from an internal serine residue via an autocatalytic post-translational modification. Two non-identical subunits are generated from the proenzyme in this reaction, and the pyruvate is formed at the N-terminus of the alpha chain, which is derived from the carboxyl end of the proenzyme. The post-translation cleavage follows an unusual pathway, termed non-hydrolytic serinolysis, in which the side chain hydroxyl group of the serine supplies its oxygen atom to form the C-terminus of the beta chain, while the remainder of the serine residue undergoes an oxidative deamination to produce ammonia and the pyruvoyl prosthetic group on the alpha chain.

The protein resides in the cell membrane. It carries out the reaction a 1,2-diacyl-sn-glycero-3-phospho-L-serine + H(+) = a 1,2-diacyl-sn-glycero-3-phosphoethanolamine + CO2. The protein operates within phospholipid metabolism; phosphatidylethanolamine biosynthesis; phosphatidylethanolamine from CDP-diacylglycerol: step 2/2. In terms of biological role, catalyzes the formation of phosphatidylethanolamine (PtdEtn) from phosphatidylserine (PtdSer). This is Phosphatidylserine decarboxylase proenzyme from Burkholderia cenocepacia (strain ATCC BAA-245 / DSM 16553 / LMG 16656 / NCTC 13227 / J2315 / CF5610) (Burkholderia cepacia (strain J2315)).